Consider the following 671-residue polypeptide: DNA ligase (671 aa).

Residues 32–36, 81–82, and Glu-113 each bind NAD(+); these read DAEYD and SL. The active-site N6-AMP-lysine intermediate is Lys-115. Arg-136, Glu-173, Lys-290, and Lys-314 together coordinate NAD(+). 4 residues coordinate Zn(2+): Cys-408, Cys-411, Cys-426, and Cys-432. The 79-residue stretch at 593–671 folds into the BRCT domain; the sequence is EIDSPFAGKT…EAEMIRLLGA (79 aa).

It belongs to the NAD-dependent DNA ligase family. LigA subfamily. The cofactor is Mg(2+). Mn(2+) serves as cofactor.

It carries out the reaction NAD(+) + (deoxyribonucleotide)n-3'-hydroxyl + 5'-phospho-(deoxyribonucleotide)m = (deoxyribonucleotide)n+m + AMP + beta-nicotinamide D-nucleotide.. In terms of biological role, DNA ligase that catalyzes the formation of phosphodiester linkages between 5'-phosphoryl and 3'-hydroxyl groups in double-stranded DNA using NAD as a coenzyme and as the energy source for the reaction. It is essential for DNA replication and repair of damaged DNA. The sequence is that of DNA ligase from Salmonella paratyphi C (strain RKS4594).